The chain runs to 684 residues: Probable potassium transport system protein Kup (684 aa).

A run of 12 helical transmembrane segments spans residues 19–39 (ALLVTLGVVYGDIGTSPLYVM), 61–81 (VSLIFWTLLIITTVKYVLIAL), 104–124 (WLVLPAMVGGAALLADGMLTP), 151–171 (QVIWVTILIITFLFFIQRFGT), 177–197 (AFGPIMFVWFTFLGVAGFIAL), 223–243 (MGLFILGSIFLATTGAEALYS), 255–275 (LSWPYVNICLVLNYFGQAVWL), 303–323 (LGAIILATLAAIIASQALISG), 352–372 (LYIPVVNTILWLACLAIIGYF), 381–401 (AYGLAITITMLMTTLLLYQYL), 407–427 (PAVIAIGTLIFFSAIETVFFI), and 433–453 (FLHGGYVTAMIAFIILAVMYV).

It belongs to the HAK/KUP transporter (TC 2.A.72) family.

It is found in the cell membrane. The enzyme catalyses K(+)(in) + H(+)(in) = K(+)(out) + H(+)(out). Its function is as follows. Transport of potassium into the cell. Likely operates as a K(+):H(+) symporter. This chain is Probable potassium transport system protein Kup, found in Lacticaseibacillus casei (strain BL23) (Lactobacillus casei).